A 391-amino-acid polypeptide reads, in one-letter code: Phosphoglycerate kinase (391 aa).

Residues 21 to 23 (DLN), arginine 36, 59 to 62 (HLGR), arginine 113, and arginine 146 each bind substrate. ATP-binding positions include lysine 197, glutamate 319, and 345 to 348 (GGDT).

Belongs to the phosphoglycerate kinase family. As to quaternary structure, monomer.

The protein localises to the cytoplasm. The catalysed reaction is (2R)-3-phosphoglycerate + ATP = (2R)-3-phospho-glyceroyl phosphate + ADP. The protein operates within carbohydrate degradation; glycolysis; pyruvate from D-glyceraldehyde 3-phosphate: step 2/5. This chain is Phosphoglycerate kinase, found in Shewanella sediminis (strain HAW-EB3).